A 570-amino-acid polypeptide reads, in one-letter code: Proline--tRNA ligase (570 aa).

Belongs to the class-II aminoacyl-tRNA synthetase family. ProS type 1 subfamily. In terms of assembly, homodimer.

It is found in the cytoplasm. The catalysed reaction is tRNA(Pro) + L-proline + ATP = L-prolyl-tRNA(Pro) + AMP + diphosphate. Its function is as follows. Catalyzes the attachment of proline to tRNA(Pro) in a two-step reaction: proline is first activated by ATP to form Pro-AMP and then transferred to the acceptor end of tRNA(Pro). As ProRS can inadvertently accommodate and process non-cognate amino acids such as alanine and cysteine, to avoid such errors it has two additional distinct editing activities against alanine. One activity is designated as 'pretransfer' editing and involves the tRNA(Pro)-independent hydrolysis of activated Ala-AMP. The other activity is designated 'posttransfer' editing and involves deacylation of mischarged Ala-tRNA(Pro). The misacylated Cys-tRNA(Pro) is not edited by ProRS. The sequence is that of Proline--tRNA ligase from Shewanella sp. (strain MR-4).